The sequence spans 788 residues: Protein translocase subunit SecA 2 (788 aa).

ATP contacts are provided by residues Gln86, Gly104 to Thr108, and Asp493.

It belongs to the SecA family. In terms of assembly, monomer and homodimer. Part of the essential Sec protein translocation apparatus which comprises SecA, SecYEG and auxiliary proteins SecDF. Other proteins may also be involved.

It is found in the cell membrane. It localises to the cytoplasm. The enzyme catalyses ATP + H2O + cellular proteinSide 1 = ADP + phosphate + cellular proteinSide 2.. Functionally, part of the Sec protein translocase complex. Interacts with the SecYEG preprotein conducting channel. Has a central role in coupling the hydrolysis of ATP to the transfer of proteins into and across the cell membrane, serving as an ATP-driven molecular motor driving the stepwise translocation of polypeptide chains across the membrane. This chain is Protein translocase subunit SecA 2, found in Bacillus cereus (strain ZK / E33L).